We begin with the raw amino-acid sequence, 505 residues long: Maturase K (505 aa).

Belongs to the intron maturase 2 family. MatK subfamily.

It is found in the plastid. The protein localises to the chloroplast. Its function is as follows. Usually encoded in the trnK tRNA gene intron. Probably assists in splicing its own and other chloroplast group II introns. This Froelichia floridana (Florida snake-cotton) protein is Maturase K.